Here is a 159-residue protein sequence, read N- to C-terminus: Gigasin-1 (159 aa).

Disordered stretches follow at residues 1-33 and 80-159; these read GKAT…HDQT and KESY…KYRR.

Component of the organic matrix of calcified shell layers.

The polypeptide is Gigasin-1 (Magallana gigas (Pacific oyster)).